A 268-amino-acid polypeptide reads, in one-letter code: Octanoyltransferase (268 aa).

The BPL/LPL catalytic domain occupies 73–261; it reads GEADELVWLL…AFEEVFGPAV (189 aa). Substrate contacts are provided by residues 112–119, 192–194, and 205–207; these read RGGEYTYH, ALG, and GLS. Cysteine 223 functions as the Acyl-thioester intermediate in the catalytic mechanism.

It belongs to the LipB family.

The protein localises to the cytoplasm. It catalyses the reaction octanoyl-[ACP] + L-lysyl-[protein] = N(6)-octanoyl-L-lysyl-[protein] + holo-[ACP] + H(+). Its pathway is protein modification; protein lipoylation via endogenous pathway; protein N(6)-(lipoyl)lysine from octanoyl-[acyl-carrier-protein]: step 1/2. Its function is as follows. Catalyzes the transfer of endogenously produced octanoic acid from octanoyl-acyl-carrier-protein onto the lipoyl domains of lipoate-dependent enzymes. Lipoyl-ACP can also act as a substrate although octanoyl-ACP is likely to be the physiological substrate. This is Octanoyltransferase from Agrobacterium fabrum (strain C58 / ATCC 33970) (Agrobacterium tumefaciens (strain C58)).